Reading from the N-terminus, the 339-residue chain is Probable G-protein coupled receptor 33 (339 aa).

Over M1–T30 the chain is Extracellular. N-linked (GlcNAc...) asparagine glycosylation is found at N5, N12, and N19. The helical transmembrane segment at I31 to M53 threads the bilayer. At L54 to T64 the chain is on the cytoplasmic side. Residues L65–T86 traverse the membrane as a helical segment. The Extracellular segment spans residues S87 to A103. Cysteines 101 and 179 form a disulfide. A helical transmembrane segment spans residues F104 to V124. Residues A125 to H143 lie on the Cytoplasmic side of the membrane. Residues W144 to V165 traverse the membrane as a helical segment. The Extracellular portion of the chain corresponds to F166–R209. The helical transmembrane segment at F210 to T230 threads the bilayer. At K231–V246 the chain is on the cytoplasmic side. A helical membrane pass occupies residues M247–V268. Over L269–L283 the chain is Extracellular. A helical membrane pass occupies residues A284 to G303. The Cytoplasmic segment spans residues E304 to I339.

This sequence belongs to the G-protein coupled receptor 1 family. As to expression, expressed predominantly in lung, spleen and testis.

It localises to the cell membrane. Functionally, orphan receptor; could be a chemoattractant receptor. In Mus musculus (Mouse), this protein is Probable G-protein coupled receptor 33 (Gpr33).